The following is a 478-amino-acid chain: Phosphomannomutase (478 aa).

A helical transmembrane segment spans residues phenylalanine 30 to methionine 46. Residue serine 111 is the Phosphoserine intermediate of the active site. Mg(2+) is bound by residues serine 111, aspartate 245, aspartate 247, and aspartate 249. Residues isoleucine 265 to serine 284 traverse the membrane as a helical segment.

It belongs to the phosphohexose mutase family. It depends on Mg(2+) as a cofactor.

The protein resides in the cell membrane. The enzyme catalyses alpha-D-mannose 1-phosphate = D-mannose 6-phosphate. It functions in the pathway nucleotide-sugar biosynthesis; GDP-alpha-D-mannose biosynthesis; alpha-D-mannose 1-phosphate from D-fructose 6-phosphate: step 2/2. It participates in bacterial outer membrane biogenesis; LPS O-antigen biosynthesis. In terms of biological role, involved in GDP-mannose biosynthesis which serves as the activated sugar nucleotide precursor for mannose residues in cell surface polysaccharides. This enzyme participates in synthesis of the LPS group C2 O antigen. This chain is Phosphomannomutase (manB), found in Salmonella muenchen.